The following is a 344-amino-acid chain: tRNA N6-adenosine threonylcarbamoyltransferase (344 aa).

Fe cation-binding residues include histidine 111 and histidine 115. Substrate contacts are provided by residues 134–138, aspartate 167, glycine 180, and asparagine 273; that span reads LVSGG. Residue aspartate 301 coordinates Fe cation.

This sequence belongs to the KAE1 / TsaD family. Fe(2+) serves as cofactor.

It localises to the cytoplasm. The enzyme catalyses L-threonylcarbamoyladenylate + adenosine(37) in tRNA = N(6)-L-threonylcarbamoyladenosine(37) in tRNA + AMP + H(+). In terms of biological role, required for the formation of a threonylcarbamoyl group on adenosine at position 37 (t(6)A37) in tRNAs that read codons beginning with adenine. Is involved in the transfer of the threonylcarbamoyl moiety of threonylcarbamoyl-AMP (TC-AMP) to the N6 group of A37, together with TsaE and TsaB. TsaD likely plays a direct catalytic role in this reaction. The polypeptide is tRNA N6-adenosine threonylcarbamoyltransferase (Cupriavidus pinatubonensis (strain JMP 134 / LMG 1197) (Cupriavidus necator (strain JMP 134))).